A 149-amino-acid chain; its full sequence is UPF0178 protein Lmo1456 (149 aa).

It belongs to the UPF0178 family.

This is UPF0178 protein Lmo1456 from Listeria monocytogenes serovar 1/2a (strain ATCC BAA-679 / EGD-e).